The following is a 138-amino-acid chain: Cytochrome b5 (138 aa).

A Cytochrome b5 heme-binding domain is found at 14-90 (GRYYRLEEVQ…SETFIIGELH (77 aa)). Heme is bound by residues His49 and His73. The chain crosses the membrane as a helical span at residues 114–136 (SWSNWVIPAIAAIIVALMYRSYM).

This sequence belongs to the cytochrome b5 family.

It is found in the endoplasmic reticulum membrane. The protein resides in the microsome membrane. Cytochrome b5 is a membrane-bound hemoprotein functioning as an electron carrier for several membrane-bound oxygenases. This is Cytochrome b5 (CYB5A) from Gallus gallus (Chicken).